The sequence spans 430 residues: Synaptotagmin-11 (430 aa).

Topologically, residues 1–15 (MAEITNIRPSFDVSP) are vesicular. The chain crosses the membrane as a helical span at residues 16 to 36 (VAAGLIGASVLVVCVSVTVFV). At 37–430 (WTCCHQQAEK…VAKWHSLSEY (394 aa)) the chain is on the cytoplasmic side. A disordered region spans residues 132-154 (RSPMTSLTPGESKPTSPSSPEED). S133 is subject to Phosphoserine. Positions 140-150 (PGESKPTSPSS) are enriched in low complexity. C2 domains follow at residues 156 to 278 (MLGS…QLTR) and 290 to 425 (SRGE…AKWH). Residues D249, S252, and D255 each contribute to the Ca(2+) site.

It belongs to the synaptotagmin family. Homodimer. Can also form heterodimers. Interacts with PRKN. Interacts (via C2 2 domain) with AGO2 and SND1; the interaction with SND1 is direct. Interacts with KIF1A; the interaction increases in presence of calcium. The cofactor is Ca(2+). Post-translationally, ubiquitinated, at least by PRKN, and targeted to the proteasome complex for degradation. Ubiquitination is inhibited by ATP13A2. Highly expressed in brain and at lower levels in other tissues.

It is found in the cytoplasmic vesicle membrane. The protein localises to the perikaryon. It localises to the golgi apparatus. The protein resides in the trans-Golgi network membrane. Its subcellular location is the recycling endosome membrane. It is found in the lysosome membrane. The protein localises to the cytoplasmic vesicle. It localises to the phagosome. The protein resides in the cell projection. Its subcellular location is the axon. It is found in the dendrite. The protein localises to the postsynaptic density. It localises to the clathrin-coated vesicle membrane. Its function is as follows. Synaptotagmin family member involved in vesicular and membrane trafficking which does not bind Ca(2+). Inhibits clathrin-mediated and bulk endocytosis in neurons, functions to ensure precision in vesicle retrieval. Plays an important role in dopamine transmission by regulating endocytosis and the vesicle-recycling process. Essential component of a neuronal vesicular trafficking pathway that differs from the synaptic vesicle trafficking pathway but is crucial for development and synaptic plasticity. In macrophages and microglia, inhibits the conventional cytokine secretion, of at least IL6 and TNF, and phagocytosis. In astrocytes, regulates lysosome exocytosis, mechanism required for the repair of injured astrocyte cell membrane. Required for the ATP13A2-mediated regulation of the autophagy-lysosome pathway. In Rattus norvegicus (Rat), this protein is Synaptotagmin-11.